The primary structure comprises 239 residues: 6-phosphogluconolactonase (239 aa).

It belongs to the glucosamine/galactosamine-6-phosphate isomerase family. 6-phosphogluconolactonase subfamily.

It carries out the reaction 6-phospho-D-glucono-1,5-lactone + H2O = 6-phospho-D-gluconate + H(+). It participates in carbohydrate degradation; pentose phosphate pathway; D-ribulose 5-phosphate from D-glucose 6-phosphate (oxidative stage): step 2/3. In terms of biological role, hydrolysis of 6-phosphogluconolactone to 6-phosphogluconate. This is 6-phosphogluconolactonase (pgl) from Xylella fastidiosa (strain 9a5c).